Reading from the N-terminus, the 342-residue chain is Phenylalanine--tRNA ligase alpha subunit (342 aa).

Position 260 (E260) interacts with Mg(2+).

It belongs to the class-II aminoacyl-tRNA synthetase family. Phe-tRNA synthetase alpha subunit type 1 subfamily. In terms of assembly, tetramer of two alpha and two beta subunits. Requires Mg(2+) as cofactor.

The protein resides in the cytoplasm. It catalyses the reaction tRNA(Phe) + L-phenylalanine + ATP = L-phenylalanyl-tRNA(Phe) + AMP + diphosphate + H(+). The polypeptide is Phenylalanine--tRNA ligase alpha subunit (Nocardia farcinica (strain IFM 10152)).